Consider the following 527-residue polypeptide: Bifunctional purine biosynthesis protein PurH (527 aa).

The region spanning 9–156 is the MGS-like domain; the sequence is NAKRPIRRAL…KNHPSVAVVV (148 aa).

The protein belongs to the PurH family.

The enzyme catalyses (6R)-10-formyltetrahydrofolate + 5-amino-1-(5-phospho-beta-D-ribosyl)imidazole-4-carboxamide = 5-formamido-1-(5-phospho-D-ribosyl)imidazole-4-carboxamide + (6S)-5,6,7,8-tetrahydrofolate. It catalyses the reaction IMP + H2O = 5-formamido-1-(5-phospho-D-ribosyl)imidazole-4-carboxamide. It functions in the pathway purine metabolism; IMP biosynthesis via de novo pathway; 5-formamido-1-(5-phospho-D-ribosyl)imidazole-4-carboxamide from 5-amino-1-(5-phospho-D-ribosyl)imidazole-4-carboxamide (10-formyl THF route): step 1/1. It participates in purine metabolism; IMP biosynthesis via de novo pathway; IMP from 5-formamido-1-(5-phospho-D-ribosyl)imidazole-4-carboxamide: step 1/1. The chain is Bifunctional purine biosynthesis protein PurH from Mycolicibacterium paratuberculosis (strain ATCC BAA-968 / K-10) (Mycobacterium paratuberculosis).